The chain runs to 348 residues: Major outer membrane protein (348 aa).

The N-terminal stretch at 1-20 is a signal peptide; the sequence is MKKTIVALAVAAVAATSANA.

Disulfide bond interactions within and between MOMP molecules and other components form high molecular-weight oligomers.

The protein resides in the cell outer membrane. In terms of biological role, structural rigidity of the outer membrane of elementary bodies and porin forming, permitting diffusion of solutes through the intracellular reticulate body membrane. This Pasteurella multocida (strain Pm70) protein is Major outer membrane protein (ompH).